The chain runs to 259 residues: Phosphatidylserine decarboxylase proenzyme (259 aa).

Catalysis depends on charge relay system; for autoendoproteolytic cleavage activity residues aspartate 86, histidine 142, and serine 226. Serine 226 functions as the Schiff-base intermediate with substrate; via pyruvic acid; for decarboxylase activity in the catalytic mechanism. A Pyruvic acid (Ser); by autocatalysis modification is found at serine 226.

This sequence belongs to the phosphatidylserine decarboxylase family. PSD-B subfamily. Prokaryotic type I sub-subfamily. As to quaternary structure, heterodimer of a large membrane-associated beta subunit and a small pyruvoyl-containing alpha subunit. Pyruvate is required as a cofactor. In terms of processing, is synthesized initially as an inactive proenzyme. Formation of the active enzyme involves a self-maturation process in which the active site pyruvoyl group is generated from an internal serine residue via an autocatalytic post-translational modification. Two non-identical subunits are generated from the proenzyme in this reaction, and the pyruvate is formed at the N-terminus of the alpha chain, which is derived from the carboxyl end of the proenzyme. The autoendoproteolytic cleavage occurs by a canonical serine protease mechanism, in which the side chain hydroxyl group of the serine supplies its oxygen atom to form the C-terminus of the beta chain, while the remainder of the serine residue undergoes an oxidative deamination to produce ammonia and the pyruvoyl prosthetic group on the alpha chain. During this reaction, the Ser that is part of the protease active site of the proenzyme becomes the pyruvoyl prosthetic group, which constitutes an essential element of the active site of the mature decarboxylase.

The protein resides in the cell membrane. The enzyme catalyses a 1,2-diacyl-sn-glycero-3-phospho-L-serine + H(+) = a 1,2-diacyl-sn-glycero-3-phosphoethanolamine + CO2. The protein operates within phospholipid metabolism; phosphatidylethanolamine biosynthesis; phosphatidylethanolamine from CDP-diacylglycerol: step 2/2. Functionally, catalyzes the formation of phosphatidylethanolamine (PtdEtn) from phosphatidylserine (PtdSer). The chain is Phosphatidylserine decarboxylase proenzyme from Geobacillus sp. (strain WCH70).